The chain runs to 536 residues: Interferon alpha/beta receptor 2 (536 aa).

Residues methionine 1–glycine 26 form the signal peptide. Over isoleucine 27–threonine 246 the chain is Extracellular. Disulfide bonds link cysteine 39-cysteine 122 and cysteine 85-cysteine 93. N-linked (GlcNAc...) asparagine glycans are attached at residues asparagine 58, asparagine 87, asparagine 101, asparagine 147, and asparagine 191. Cysteines 210 and 230 form a disulfide. The chain crosses the membrane as a helical span at residues isoleucine 247 to leucine 267. The Cytoplasmic portion of the chain corresponds to lysine 268–asparagine 536. The residue at position 340 (tyrosine 340) is a Phosphotyrosine. Tandem repeats lie at residues serine 358 to cysteine 362, serine 363 to cysteine 367, and serine 368 to cysteine 372. Positions serine 358–cysteine 372 are 3 X 5 AA tandem repeats of S-L-E-D-C. A disordered region spans residues leucine 369–arginine 434. The segment covering threonine 420–glutamate 429 has biased composition (acidic residues). The segment at glutamate 432–glutamate 456 is mediates interaction with STAT2 (and required for the recruitment of USP18). Serine 480 is modified (phosphoserine). The segment at glutamate 487–glycine 522 is disordered. A Phosphotyrosine modification is found at tyrosine 525.

This sequence belongs to the type II cytokine receptor family. Heterodimer with IFNAR1; forming the receptor for type I interferon. Interacts with the transcriptional factors STAT1 and STAT2. Interacts with JAK1. Interacts with USP18; indirectly via STAT2, it negatively regulates the assembly of the ternary interferon-IFNAR1-IFNAR2 complex and therefore type I interferon signaling. Phosphorylated on tyrosine residues upon interferon binding. Phosphorylation at Tyr-340 or Tyr-525 are sufficient to mediate interferon dependent activation of STAT1, STAT2 and STAT3 leading to antiproliferative effects on many different cell types. Expressed in the endometrium. Expressed in all tissues examined except conceptus at day 15 of pregnancy.

The protein localises to the cell membrane. Its function is as follows. Together with IFNAR1, forms the heterodimeric receptor for type I interferons (including interferons alpha, beta, epsilon, omega and kappa). Type I interferon binding activates the JAK-STAT signaling cascade, resulting in transcriptional activation or repression of interferon-regulated genes that encode the effectors of the interferon response. Mechanistically, type I interferon-binding brings the IFNAR1 and IFNAR2 subunits into close proximity with one another, driving their associated Janus kinases (JAKs) (TYK2 bound to IFNAR1 and JAK1 bound to IFNAR2) to cross-phosphorylate one another. The activated kinases phosphorylate specific tyrosine residues on the intracellular domains of IFNAR1 and IFNAR2, forming docking sites for the STAT transcription factors (STAT1, STAT2 and STAT). STAT proteins are then phosphorylated by the JAKs, promoting their translocation into the nucleus to regulate expression of interferon-regulated genes. This chain is Interferon alpha/beta receptor 2 (IFNAR2), found in Ovis aries (Sheep).